Here is a 302-residue protein sequence, read N- to C-terminus: Acetaldehyde dehydrogenase (302 aa).

The Acyl-thioester intermediate role is filled by Cys-131. NAD(+) contacts are provided by residues 162–170 (SAGPGTRKN) and Asn-273.

Belongs to the acetaldehyde dehydrogenase family.

It carries out the reaction acetaldehyde + NAD(+) + CoA = acetyl-CoA + NADH + H(+). The chain is Acetaldehyde dehydrogenase from Acidovorax sp. (strain JS42).